We begin with the raw amino-acid sequence, 247 residues long: Carboxy-S-adenosyl-L-methionine synthase (247 aa).

S-adenosyl-L-methionine contacts are provided by residues tyrosine 40, 65–67 (GSS), 90–91 (DN), 122–123 (DI), asparagine 137, and arginine 204.

It belongs to the class I-like SAM-binding methyltransferase superfamily. Cx-SAM synthase family. In terms of assembly, homodimer.

The enzyme catalyses prephenate + S-adenosyl-L-methionine = carboxy-S-adenosyl-L-methionine + 3-phenylpyruvate + H2O. Its function is as follows. Catalyzes the conversion of S-adenosyl-L-methionine (SAM) to carboxy-S-adenosyl-L-methionine (Cx-SAM). The protein is Carboxy-S-adenosyl-L-methionine synthase of Pseudomonas fluorescens (strain ATCC BAA-477 / NRRL B-23932 / Pf-5).